We begin with the raw amino-acid sequence, 563 residues long: Arginine--tRNA ligase (563 aa).

A 'HIGH' region motif is present at residues 121-131; that stretch reads PNIAKPFSIGH.

The protein belongs to the class-I aminoacyl-tRNA synthetase family. As to quaternary structure, monomer.

The protein localises to the cytoplasm. It carries out the reaction tRNA(Arg) + L-arginine + ATP = L-arginyl-tRNA(Arg) + AMP + diphosphate. The sequence is that of Arginine--tRNA ligase from Streptococcus pyogenes serotype M18 (strain MGAS8232).